A 147-amino-acid polypeptide reads, in one-letter code: Transcriptional regulator FurA (147 aa).

Residues 1–85 (MSSIPDYAEQ…GSVARYESRV (85 aa)) are DNA-binding. The Zn(2+) site is built by histidine 34 and glutamate 82. The interval 86 to 147 (GDNHHHIVCR…SISDTSRSHP (62 aa)) is dimerization. 2 residues coordinate Fe cation: aspartate 87 and histidine 89. Zn(2+) contacts are provided by histidine 91, cysteine 94, cysteine 97, and aspartate 102. Residue glutamate 109 participates in Fe cation binding.

The protein belongs to the Fur family. As to quaternary structure, homodimer.

The protein resides in the cytoplasm. Its function is as follows. Represses transcription of the catalase-peroxidase gene katG and its own transcription by binding to the promoter region in a redox-dependent manner. The chain is Transcriptional regulator FurA (furA) from Mycobacterium bovis (strain ATCC BAA-935 / AF2122/97).